The following is a 481-amino-acid chain: Glutamate mutase epsilon subunit (481 aa).

Residue arginine 67 coordinates L-glutamate. Glycine 69 is a binding site for adenosylcob(III)alamin. Residue arginine 99 participates in L-glutamate binding. Residue asparagine 122 coordinates adenosylcob(III)alamin. L-glutamate-binding positions include arginine 148–histidine 149, glutamate 170, and tyrosine 176. Proline 179 lines the adenosylcob(III)alamin pocket. Position 180 (tyrosine 180) interacts with L-glutamate. Phenylalanine 296, lysine 325, glutamate 329, and isoleucine 333 together coordinate adenosylcob(III)alamin.

Belongs to the methylaspartate mutase GlmE subunit family. Heterotetramer composed of 2 epsilon subunits (GlmE) and 2 sigma subunits (GlmS). GlmE exists as a homodimer and GlmS as a monomer. It depends on adenosylcob(III)alamin as a cofactor.

It catalyses the reaction (2S,3S)-3-methyl-L-aspartate = L-glutamate. It participates in amino-acid degradation; L-glutamate degradation via mesaconate pathway; acetate and pyruvate from L-glutamate: step 1/4. Functionally, catalyzes the carbon skeleton rearrangement of L-glutamate to L-threo-3-methylaspartate ((2S,3S)-3-methylaspartate). This Yersinia enterocolitica serotype O:8 / biotype 1B (strain NCTC 13174 / 8081) protein is Glutamate mutase epsilon subunit.